Reading from the N-terminus, the 152-residue chain is MSRVQLALNVDDLEAAITFYSRLFNAEPAKRKPGYANFAIADPPLKLVLLENPGTGGTLNHLGVEVGSSNTVHAEIARLTEAGLVTEKEIGTTCCFATQDKVWVTGPGGERWEVYTVLADSETFGSGPRHNDTSDGEASMCCDGQVAVGASG.

One can recognise a VOC domain in the interval 2–117 (SRVQLALNVD…GGERWEVYTV (116 aa)).

This sequence to B.subtilis YqcK.

In Mycobacterium tuberculosis (strain CDC 1551 / Oshkosh), this protein is Cadmium-induced protein CadI (cadI).